We begin with the raw amino-acid sequence, 300 residues long: Bifunctional protein FolD 1 (300 aa).

NADP(+) contacts are provided by residues 166–168 (GRS), serine 191, and isoleucine 232.

This sequence belongs to the tetrahydrofolate dehydrogenase/cyclohydrolase family. Homodimer.

It catalyses the reaction (6R)-5,10-methylene-5,6,7,8-tetrahydrofolate + NADP(+) = (6R)-5,10-methenyltetrahydrofolate + NADPH. The catalysed reaction is (6R)-5,10-methenyltetrahydrofolate + H2O = (6R)-10-formyltetrahydrofolate + H(+). It functions in the pathway one-carbon metabolism; tetrahydrofolate interconversion. Functionally, catalyzes the oxidation of 5,10-methylenetetrahydrofolate to 5,10-methenyltetrahydrofolate and then the hydrolysis of 5,10-methenyltetrahydrofolate to 10-formyltetrahydrofolate. This chain is Bifunctional protein FolD 1, found in Roseobacter denitrificans (strain ATCC 33942 / OCh 114) (Erythrobacter sp. (strain OCh 114)).